The following is a 395-amino-acid chain: MNAIAVSPVQHVGVIGGGQLAWMLAPAAQQLGMSLHVQTPNDHDPAVAIADQTVLAAVADAAATAKLAQACDVITFENEFVDLPALTELEETGVRFRPRPAAIASLLDKLDQRQLLTRLGLPTPRFLAIAAATATESELTALGFPVVLKQRRHGYDGKGTQVLRSLAELQQALQSYGDTPLLLEEFIPFEQELAVMVARSQSGAIATFPVVQTHQQNQVCRWVVAPAAIPGALQKAVAAIARTLVETVDYVGVAGIELFQQGDRLWVNEIAPRTHNSGHYSLDACQTSQFEQQLRAIADLPLGSTALQWPGALMVNLLGFEDHQSGYAELRQQLAALPGACLYWYGKTESKPGRKLGHITLPLSGASSTERAQQAQTMLAQVEAIWPNPDTAHQP.

ATP-binding positions include Lys109, Lys149, 184 to 187, Glu192, and 268 to 269; these read EEFI and NE. In terms of domain architecture, ATP-grasp spans 113–298; it reads RQLLTRLGLP…QFEQQLRAIA (186 aa).

It belongs to the PurK/PurT family. Homodimer.

The enzyme catalyses 5-amino-1-(5-phospho-beta-D-ribosyl)imidazole + hydrogencarbonate + ATP = 5-carboxyamino-1-(5-phospho-D-ribosyl)imidazole + ADP + phosphate + 2 H(+). It functions in the pathway purine metabolism; IMP biosynthesis via de novo pathway; 5-amino-1-(5-phospho-D-ribosyl)imidazole-4-carboxylate from 5-amino-1-(5-phospho-D-ribosyl)imidazole (N5-CAIR route): step 1/2. Catalyzes the ATP-dependent conversion of 5-aminoimidazole ribonucleotide (AIR) and HCO(3)(-) to N5-carboxyaminoimidazole ribonucleotide (N5-CAIR). This chain is N5-carboxyaminoimidazole ribonucleotide synthase, found in Synechococcus elongatus (strain ATCC 33912 / PCC 7942 / FACHB-805) (Anacystis nidulans R2).